Here is a 274-residue protein sequence, read N- to C-terminus: NH(3)-dependent NAD(+) synthetase (274 aa).

Residue 46–53 (GISGGQDS) participates in ATP binding. A Mg(2+)-binding site is contributed by Asp-52. Arg-140 provides a ligand contact to deamido-NAD(+). Thr-160 contacts ATP. Position 165 (Glu-165) interacts with Mg(2+). Deamido-NAD(+)-binding residues include Lys-173 and Asp-180. ATP-binding residues include Lys-189 and Thr-211. Position 260–261 (260–261 (HK)) interacts with deamido-NAD(+).

This sequence belongs to the NAD synthetase family. As to quaternary structure, homodimer.

The catalysed reaction is deamido-NAD(+) + NH4(+) + ATP = AMP + diphosphate + NAD(+) + H(+). The protein operates within cofactor biosynthesis; NAD(+) biosynthesis; NAD(+) from deamido-NAD(+) (ammonia route): step 1/1. Functionally, catalyzes the ATP-dependent amidation of deamido-NAD to form NAD. Uses ammonia as a nitrogen source. This Streptococcus gordonii (strain Challis / ATCC 35105 / BCRC 15272 / CH1 / DL1 / V288) protein is NH(3)-dependent NAD(+) synthetase.